The primary structure comprises 575 residues: Isocitrate dehydrogenase kinase/phosphatase (575 aa).

ATP-binding positions include 315–321 (APGVKGM) and Lys336. The active site involves Asp371.

Belongs to the AceK family.

The protein localises to the cytoplasm. It carries out the reaction L-seryl-[isocitrate dehydrogenase] + ATP = O-phospho-L-seryl-[isocitrate dehydrogenase] + ADP + H(+). Functionally, bifunctional enzyme which can phosphorylate or dephosphorylate isocitrate dehydrogenase (IDH) on a specific serine residue. This is a regulatory mechanism which enables bacteria to bypass the Krebs cycle via the glyoxylate shunt in response to the source of carbon. When bacteria are grown on glucose, IDH is fully active and unphosphorylated, but when grown on acetate or ethanol, the activity of IDH declines drastically concomitant with its phosphorylation. This is Isocitrate dehydrogenase kinase/phosphatase from Yersinia pseudotuberculosis serotype I (strain IP32953).